The primary structure comprises 544 residues: Propane 2-monooxygenase, hydroxylase component large subunit (544 aa).

Fe cation-binding residues include Glu97, Glu127, His130, Glu192, Glu226, and His229.

It belongs to the TmoA/XamoA family. As to quaternary structure, the propane 2-monooxygenase multicomponent enzyme system is composed of an electron transfer component and a monooxygenase component interacting with the effector protein PrmD. The electron transfer component is composed of a reductase (PrmB), and the monooxygenase component is formed by a large subunit (PrmA) and a small subunit (PrmC). Probably requires the presence of the chaperonin-like protein PrmG to ensure a productive folding, resulting of a soluble PrmA, which leads to the active form of PrmABCD. Fe(2+) serves as cofactor.

The catalysed reaction is propane + NADH + O2 + H(+) = propan-2-ol + NAD(+) + H2O. Component of the propane 2-monooxygenase multicomponent enzyme system which is involved in the degradation of propane via the O2-dependent hydroxylation of propane. Also able to catalyze the oxidation the water contaminant N-nitrosodimethylamine (NDMA). The polypeptide is Propane 2-monooxygenase, hydroxylase component large subunit (Rhodococcus jostii (strain RHA1)).